The sequence spans 828 residues: Mediator of RNA polymerase II transcription subunit 16 (828 aa).

5 WD repeats span residues 68–107 (GHQE…ANSW), 199–241 (RCRV…VSEK), 264–308 (DKFP…LPLN), 622–663 (NQGS…CLPV), and 777–816 (FPTE…TCLC).

Belongs to the Mediator complex subunit 16 family. Component of the Mediator complex.

It localises to the nucleus. Functionally, component of the Mediator complex, a coactivator involved in the regulated transcription of nearly all RNA polymerase II-dependent genes. Mediator functions as a bridge to convey information from gene-specific regulatory proteins to the basal RNA polymerase II transcription machinery. Mediator is recruited to promoters by direct interactions with regulatory proteins and serves as a scaffold for the assembly of a functional preinitiation complex with RNA polymerase II and the general transcription factors. The protein is Mediator of RNA polymerase II transcription subunit 16 (med16) of Xenopus tropicalis (Western clawed frog).